A 1057-amino-acid chain; its full sequence is Probable E3 ubiquitin-protein ligase HERC4 (1057 aa).

RCC1 repeat units follow at residues 1-51, 52-101, 102-154, 156-207, 208-259, 261-311, and 313-366; these read MLCW…FVLD, DGTV…ALND, KGQV…ALSK, SEVF…VLTL, SGAI…ALTK, GGVF…AFVP, and SGRI…CVKR. The HECT domain maps to 730–1057; it reads KNIDYKKPLK…IDHNEGFSLI (328 aa). Cysteine 1025 (glycyl thioester intermediate) is an active-site residue.

As to expression, ubiquitously expressed, highest expression is found in testis during spermiogenesis. It is specifically found in spermatogonia, spermatocytes, and spermatids with little or no expression detectable in the spermatozoa, or interstitial cells.

The protein resides in the cytoplasm. The protein localises to the cytosol. The enzyme catalyses S-ubiquitinyl-[E2 ubiquitin-conjugating enzyme]-L-cysteine + [acceptor protein]-L-lysine = [E2 ubiquitin-conjugating enzyme]-L-cysteine + N(6)-ubiquitinyl-[acceptor protein]-L-lysine.. Its pathway is protein modification; protein ubiquitination. In terms of biological role, probable E3 ubiquitin-protein ligase involved in either protein trafficking or in the distribution of cellular structures. Required for spermatozoon maturation and fertility, and for the removal of the cytoplasmic droplet of the spermatozoon. E3 ubiquitin-protein ligases accept ubiquitin from an E2 ubiquitin-conjugating enzyme in the form of a thioester and then directly transfer it to targeted substrates. The chain is Probable E3 ubiquitin-protein ligase HERC4 (Herc4) from Mus musculus (Mouse).